A 269-amino-acid chain; its full sequence is tRNA pseudouridine synthase A (269 aa).

The Nucleophile role is filled by aspartate 52. Position 110 (tyrosine 110) interacts with substrate.

This sequence belongs to the tRNA pseudouridine synthase TruA family. In terms of assembly, homodimer.

The enzyme catalyses uridine(38/39/40) in tRNA = pseudouridine(38/39/40) in tRNA. Its function is as follows. Formation of pseudouridine at positions 38, 39 and 40 in the anticodon stem and loop of transfer RNAs. This is tRNA pseudouridine synthase A from Bacteroides thetaiotaomicron (strain ATCC 29148 / DSM 2079 / JCM 5827 / CCUG 10774 / NCTC 10582 / VPI-5482 / E50).